The following is a 162-amino-acid chain: UPF0305 protein MmarC5_0909 (162 aa).

Belongs to the UPF0305 family.

This Methanococcus maripaludis (strain C5 / ATCC BAA-1333) protein is UPF0305 protein MmarC5_0909.